A 147-amino-acid chain; its full sequence is Deoxyuridine 5'-triphosphate nucleotidohydrolase (147 aa).

Residue arginine 24 coordinates Mg(2+). DUTP is bound by residues proline 68–serine 70, glycine 82–aspartate 85, tyrosine 88, glycine 93, isoleucine 95, and arginine 111.

It belongs to the dUTPase family. The cofactor is Mg(2+).

The catalysed reaction is dUTP + H2O = dUMP + diphosphate + H(+). This enzyme is involved in nucleotide metabolism: it produces dUMP, the immediate precursor of thymidine nucleotides and it decreases the intracellular concentration of dUTP so that uracil cannot be incorporated into DNA. The protein is Deoxyuridine 5'-triphosphate nucleotidohydrolase (OPG046) of Bos taurus (Bovine).